A 450-amino-acid polypeptide reads, in one-letter code: Putative cysteine--tRNA ligase 2 (450 aa).

Residues 29-39 (ITPYKSTHLGH) carry the 'HIGH' region motif. Positions 270-274 (KMSKS) match the 'KMSKS' region motif. ATP is bound at residue lysine 273. A disordered region spans residues 372 to 392 (PIHPKHSPQMRDYSEHGSAGQ).

It belongs to the class-I aminoacyl-tRNA synthetase family. As to quaternary structure, monomer.

It is found in the cytoplasm. The enzyme catalyses tRNA(Cys) + L-cysteine + ATP = L-cysteinyl-tRNA(Cys) + AMP + diphosphate. This is Putative cysteine--tRNA ligase 2 (cysS2) from Tropheryma whipplei (strain TW08/27) (Whipple's bacillus).